The sequence spans 511 residues: Cytochrome P450 4B1 (511 aa).

The heme site is built by glutamate 315 and cysteine 453.

It belongs to the cytochrome P450 family. Heme is required as a cofactor.

It localises to the endoplasmic reticulum membrane. Its subcellular location is the microsome membrane. The enzyme catalyses an organic molecule + reduced [NADPH--hemoprotein reductase] + O2 = an alcohol + oxidized [NADPH--hemoprotein reductase] + H2O + H(+). Functionally, cytochromes P450 are a group of heme-thiolate monooxygenases. In liver microsomes, this enzyme is involved in an NADPH-dependent electron transport pathway. It oxidizes a variety of structurally unrelated compounds, including steroids, fatty acids, and xenobiotics. The chain is Cytochrome P450 4B1 (Cyp4b1) from Rattus norvegicus (Rat).